The chain runs to 173 residues: MMVSTAAVARVRPAQTNMVGAFNGCRSSVAFPATRKANNDLSTLPSSGGRVSCMQVWPPEGLKKFETLSYLPPLSVEDLAKEVDYLLRNDWVPCIEFSKEGFVYRENNASPGYYDGRYWTMWKLPMFGCTDASQVIAEVEEAKKAYPEYFVRIIGFDNKRQVQCISFIAYKPT.

A chloroplast-targeting transit peptide spans 1–52 (MMVSTAAVARVRPAQTNMVGAFNGCRSSVAFPATRKANNDLSTLPSSGGRVS).

It belongs to the RuBisCO small chain family. In terms of assembly, heterohexadecamer of 8 large and 8 small subunits.

It is found in the plastid. The protein localises to the chloroplast. Its function is as follows. RuBisCO catalyzes two reactions: the carboxylation of D-ribulose 1,5-bisphosphate, the primary event in carbon dioxide fixation, as well as the oxidative fragmentation of the pentose substrate. Both reactions occur simultaneously and in competition at the same active site. Although the small subunit is not catalytic it is essential for maximal activity. The protein is Ribulose bisphosphate carboxylase small subunit, chloroplastic 1 of Lemna gibba (Swollen duckweed).